A 731-amino-acid chain; its full sequence is Small conductance calcium-activated potassium channel protein 3 (731 aa).

The segment covering 1–11 has biased composition (basic and acidic residues); that stretch reads MDTSGHFHDSG. Disordered regions lie at residues 1-170 and 239-258; these read MDTS…SNPF and ATHN…FPKA. Low complexity predominate over residues 30–40; that stretch reads QQQQQQQQQQQ. Residues 41-51 are compositionally biased toward pro residues; sequence QPPPPAPPAAP. Low complexity predominate over residues 52-95; the sequence is QQPLGPSLQPQPPQLQQQQQQQQQQQQQQPPHPLSQLAQLQSQP. Over residues 112–132 the composition is skewed to polar residues; that stretch reads PSSNSTAILHPSSRQGSQLNL. Residues 138–147 are compositionally biased toward low complexity; sequence GHSPSSTATS. A Phosphoserine modification is found at Ser167. The span at 239–256 shows a compositional bias: polar residues; that stretch reads ATHNHQHAGTTASSTTFP. A helical transmembrane segment spans residues 288-308; sequence LIFGMFGIVVMVIETELSWGL. Residues 315 to 335 form a helical membrane-spanning segment; it reads FSLALKCLISLSTIILLGLII. A helical membrane pass occupies residues 366-386; sequence ISLEMLVCAIHPIPGEYKFFW. A helical transmembrane segment spans residues 405–425; the sequence is IILSIPMFLRLYLIARVMLLH. Residues 454 to 474 traverse the membrane as a helical segment; the sequence is LMTICPGTVLLVFSISLWIIA. Residues 494–514 constitute an intramembrane region (pore-forming); it reads FLGAMWLISITFLSIGYGDMV. Residues 523 to 543 traverse the membrane as a helical segment; it reads VCLLTGIMGAGCTALVVAVVA. The interval 561–637 is calmodulin-binding; sequence DTQLTKRIKN…LVDLSKMQNV (77 aa). A coiled-coil region spans residues 642–669; it reads ITELNDRSEDLEKQIGSLESKLEHLTAS. Residues 709–731 are disordered; the sequence is ISDSPIGVSSTSFPTPYTSSSSC. The span at 717–731 shows a compositional bias: low complexity; the sequence is SSTSFPTPYTSSSSC.

Belongs to the potassium channel KCNN family. KCa2.3/KCNN3 subfamily. As to quaternary structure, homodimer. Heteromultimer with KCNN2 or KCNN1; this modulates plasma membrane expression and consequently the small conductance calcium-activated potassium channel activity. The complex is composed of 4 channel subunits each of which binds to a calmodulin subunit which regulates the channel activity through calcium-binding. Interacts with CALM1. Widely distributed in human tissues and is present at 20-60% of KCNN3 in the brain.

The protein resides in the cell membrane. It is found in the cytoplasm. It localises to the myofibril. The protein localises to the sarcomere. Its subcellular location is the z line. It carries out the reaction K(+)(in) = K(+)(out). With respect to regulation, inhibited by bee venom neurotoxin apamin. Small conductance calcium-activated potassium channel that mediates the voltage-independent transmembrane transfer of potassium across the cell membrane through a constitutive interaction with calmodulin which binds the intracellular calcium allowing its opening. The current is characterized by a voltage-independent activation, an intracellular calcium concentration increase-dependent activation and a single-channel conductance of 10 picosiemens. Also presents an inwardly rectifying current, thus reducing its already small outward conductance of potassium ions, which is particularly the case when the membrane potential displays positive values, above + 20 mV. Activation is followed by membrane hyperpolarization. Thought to regulate neuronal excitability by contributing to the slow component of synaptic afterhyperpolarization. Functionally, does not function as a small conductance calcium-activated potassium channel. Selectively suppresses endogenous KCNN3 currents, in a dominant-negative fashion by decreasing the abundance of functional channels in the plasma membrane, possibly by selectively coassembling with and sequestering native KCNN3 protein in intracellular compartments. This dominant inhibitory effect extends to other members of the SK subfamily. The protein is Small conductance calcium-activated potassium channel protein 3 of Homo sapiens (Human).